The chain runs to 921 residues: Isoleucine--tRNA ligase (921 aa).

The 'HIGH' region signature appears at 57 to 67; sequence PYANGDIHMGH. L-isoleucyl-5'-AMP is bound at residue E552. Positions 593–597 match the 'KMSKS' region motif; sequence KMSKS. An ATP-binding site is contributed by K596. Zn(2+)-binding residues include C888, C891, C908, and C911.

The protein belongs to the class-I aminoacyl-tRNA synthetase family. IleS type 1 subfamily. As to quaternary structure, monomer. It depends on Zn(2+) as a cofactor.

Its subcellular location is the cytoplasm. It catalyses the reaction tRNA(Ile) + L-isoleucine + ATP = L-isoleucyl-tRNA(Ile) + AMP + diphosphate. Its function is as follows. Catalyzes the attachment of isoleucine to tRNA(Ile). As IleRS can inadvertently accommodate and process structurally similar amino acids such as valine, to avoid such errors it has two additional distinct tRNA(Ile)-dependent editing activities. One activity is designated as 'pretransfer' editing and involves the hydrolysis of activated Val-AMP. The other activity is designated 'posttransfer' editing and involves deacylation of mischarged Val-tRNA(Ile). This chain is Isoleucine--tRNA ligase, found in Bacillus anthracis (strain A0248).